Reading from the N-terminus, the 137-residue chain is Large ribosomal subunit protein uL16 (137 aa).

The protein belongs to the universal ribosomal protein uL16 family. Part of the 50S ribosomal subunit.

In terms of biological role, binds 23S rRNA and is also seen to make contacts with the A and possibly P site tRNAs. This Psychrobacter cryohalolentis (strain ATCC BAA-1226 / DSM 17306 / VKM B-2378 / K5) protein is Large ribosomal subunit protein uL16.